Here is an 89-residue protein sequence, read N- to C-terminus: uncharacterized protein (89 aa).

This sequence to M.jannaschii MJ1436.

This is an uncharacterized protein from Methanothermobacter thermautotrophicus (strain ATCC 29096 / DSM 1053 / JCM 10044 / NBRC 100330 / Delta H) (Methanobacterium thermoautotrophicum).